The sequence spans 783 residues: BMP/retinoic acid-inducible neural-specific protein 2 (783 aa).

Residues 1–33 (MRWQCGTRFRGLRPVVAPWTALLALGLPGWVLA) form the signal peptide. The region spanning 85 to 281 (RYRIYREFAR…FVAAALSYIT (197 aa)) is the MACPF domain. N-linked (GlcNAc...) asparagine glycosylation is found at Asn-185, Asn-354, Asn-473, Asn-579, Asn-626, and Asn-658.

The protein belongs to the BRINP family.

The protein localises to the secreted. Functionally, inhibits neuronal cell proliferation by negative regulation of the cell cycle transition. This chain is BMP/retinoic acid-inducible neural-specific protein 2 (BRINP2), found in Pongo abelii (Sumatran orangutan).